The following is a 397-amino-acid chain: Lysophospholipid transporter LplT (397 aa).

Helical transmembrane passes span 16-36 (MLAV…LLFA), 53-73 (VLQM…GQFA), 91-111 (LGAG…LVGI), 139-159 (LMES…GILA), 164-184 (LAAL…NLWI), 227-247 (LFWG…PVAL), 253-273 (AMPT…AGAA), 281-301 (TVSR…AFAV), 305-325 (LLPA…FIVP), 352-372 (NVAM…GVPP), and 373-393 (VAVG…LWVW).

This sequence belongs to the major facilitator superfamily. LplT (TC 2.A.1.42) family.

The protein resides in the cell inner membrane. Catalyzes the facilitated diffusion of 2-acyl-glycero-3-phosphoethanolamine (2-acyl-GPE) into the cell. This chain is Lysophospholipid transporter LplT, found in Klebsiella pneumoniae (strain 342).